The following is a 449-amino-acid chain: Allantoinase (449 aa).

Zn(2+)-binding residues include His61, His63, Lys148, His184, His240, and Asp313. At Lys148 the chain carries N6-carboxylysine.

The protein belongs to the metallo-dependent hydrolases superfamily. Allantoinase family. As to quaternary structure, homotetramer. Zn(2+) serves as cofactor. Post-translationally, carboxylation allows a single lysine to coordinate two zinc ions.

The enzyme catalyses (S)-allantoin + H2O = allantoate + H(+). The protein operates within nitrogen metabolism; (S)-allantoin degradation; allantoate from (S)-allantoin: step 1/1. Catalyzes the conversion of allantoin (5-ureidohydantoin) to allantoic acid by hydrolytic cleavage of the five-member hydantoin ring. The protein is Allantoinase of Desulfitobacterium hafniense (strain DSM 10664 / DCB-2).